Consider the following 388-residue polypeptide: Arginine biosynthesis bifunctional protein ArgJ (388 aa).

Thr150, Lys172, Thr183, Glu263, Asn383, and Thr388 together coordinate substrate. The active-site Nucleophile is Thr183.

It belongs to the ArgJ family. Heterotetramer of two alpha and two beta chains.

It is found in the cytoplasm. The enzyme catalyses N(2)-acetyl-L-ornithine + L-glutamate = N-acetyl-L-glutamate + L-ornithine. It catalyses the reaction L-glutamate + acetyl-CoA = N-acetyl-L-glutamate + CoA + H(+). The protein operates within amino-acid biosynthesis; L-arginine biosynthesis; L-ornithine and N-acetyl-L-glutamate from L-glutamate and N(2)-acetyl-L-ornithine (cyclic): step 1/1. It participates in amino-acid biosynthesis; L-arginine biosynthesis; N(2)-acetyl-L-ornithine from L-glutamate: step 1/4. Its function is as follows. Catalyzes two activities which are involved in the cyclic version of arginine biosynthesis: the synthesis of N-acetylglutamate from glutamate and acetyl-CoA as the acetyl donor, and of ornithine by transacetylation between N(2)-acetylornithine and glutamate. In Corynebacterium efficiens (strain DSM 44549 / YS-314 / AJ 12310 / JCM 11189 / NBRC 100395), this protein is Arginine biosynthesis bifunctional protein ArgJ.